A 254-amino-acid polypeptide reads, in one-letter code: 3-deoxy-manno-octulosonate cytidylyltransferase (254 aa).

The protein belongs to the KdsB family.

The protein localises to the cytoplasm. The enzyme catalyses 3-deoxy-alpha-D-manno-oct-2-ulosonate + CTP = CMP-3-deoxy-beta-D-manno-octulosonate + diphosphate. It functions in the pathway nucleotide-sugar biosynthesis; CMP-3-deoxy-D-manno-octulosonate biosynthesis; CMP-3-deoxy-D-manno-octulosonate from 3-deoxy-D-manno-octulosonate and CTP: step 1/1. The protein operates within bacterial outer membrane biogenesis; lipopolysaccharide biosynthesis. In terms of biological role, activates KDO (a required 8-carbon sugar) for incorporation into bacterial lipopolysaccharide in Gram-negative bacteria. This is 3-deoxy-manno-octulosonate cytidylyltransferase from Polynucleobacter necessarius subsp. necessarius (strain STIR1).